The following is a 330-amino-acid chain: Biotin synthase (330 aa).

In terms of domain architecture, Radical SAM core spans 53–276 (NNIRLNVLLS…VFPFKELRLS (224 aa)). Cys-68, Cys-72, and Cys-75 together coordinate [4Fe-4S] cluster. The [2Fe-2S] cluster site is built by Cys-112, Cys-144, Cys-204, and Arg-274.

It belongs to the radical SAM superfamily. Biotin synthase family. As to quaternary structure, homodimer. It depends on [4Fe-4S] cluster as a cofactor. Requires [2Fe-2S] cluster as cofactor.

It carries out the reaction (4R,5S)-dethiobiotin + (sulfur carrier)-SH + 2 reduced [2Fe-2S]-[ferredoxin] + 2 S-adenosyl-L-methionine = (sulfur carrier)-H + biotin + 2 5'-deoxyadenosine + 2 L-methionine + 2 oxidized [2Fe-2S]-[ferredoxin]. It participates in cofactor biosynthesis; biotin biosynthesis; biotin from 7,8-diaminononanoate: step 2/2. Its function is as follows. Catalyzes the conversion of dethiobiotin (DTB) to biotin by the insertion of a sulfur atom into dethiobiotin via a radical-based mechanism. This is Biotin synthase from Streptococcus agalactiae serotype V (strain ATCC BAA-611 / 2603 V/R).